The sequence spans 541 residues: uncharacterized protein (541 aa).

The signal sequence occupies residues 1–17 (MSFSATILFSPPSGSEA). Disordered regions lie at residues 28 to 47 (TSQGSTGSQGGNPPASTPIT) and 103 to 138 (GKVCTADEDRESRARTPPPEEPGVLKGSPGEASNSL). Residues 103–116 (GKVCTADEDRESRA) show a composition bias toward basic and acidic residues. Residue Thr-118 is modified to Phosphothreonine. Glycyl lysine isopeptide (Lys-Gly) (interchain with G-Cter in SUMO2) cross-links involve residues Lys-128 and Lys-223. A Phosphoserine modification is found at Ser-226. Polar residues predominate over residues 232 to 243 (AIQRASSETGPE). The interval 232 to 254 (AIQRASSETGPESGTKLPATRPE) is disordered. Phosphoserine is present on residues Ser-286 and Ser-429. The interval 494-526 (YNPNFQEDEGGGNEKGPVSPSYDQPHKTSCPDL) is disordered.

It localises to the secreted. This is an uncharacterized protein from Mus musculus (Mouse).